A 4307-amino-acid polypeptide reads, in one-letter code: Cytoplasmic dynein 2 heavy chain 1 (4307 aa).

A stem region spans residues 1 to 1650 (MANGTADVRK…CVQMVDSEFQ (1650 aa)). 145-152 (LGIVLRRS) is a binding site for ATP. Positions 1074 to 1103 (NTLDKSAKLIKEKKIEFDDLEVTRKKLVDD) form a coiled coil. AAA regions lie at residues 1651–1875 (YTYE…VLRG), 1938–2161 (ELSA…KQND), 2251–2505 (ADDF…WVLG), and 2617–2863 (HYGR…ESCK). Residues 1689–1696 (GPAGTGKT), 1979–1986 (GPSGAGKS), 2291–2298 (GPEGCGKG), and 2655–2662 (GRSGVGRR) each bind ATP. The tract at residues 2881 to 3169 (AISSSKKKEL…AEVSKAQETI (289 aa)) is stalk. Coiled coils occupy residues 2897–2982 (LQAG…KEVQ), 3109–3200 (LETE…LATL), and 3408–3442 (IQHE…SLLE). AAA stretches follow at residues 3244 to 3473 (LCTE…LIQE) and 3690 to 3905 (MALF…IIDR).

This sequence belongs to the dynein heavy chain family. As to quaternary structure, the cytoplasmic dynein complex 2 is probably composed by a heavy chain DYNC2H1 homodimer and a number of DYNC2LI1 light intermediate chains.

Its subcellular location is the cytoplasm. The protein localises to the cytoskeleton. It is found in the cilium axoneme. The protein resides in the cell membrane. Its function is as follows. May function as a motor for intraflagellar retrograde transport. Functions in cilia biogenesis. May play a role in transport between endoplasmic reticulum and Golgi or organization of the Golgi in cells. The protein is Cytoplasmic dynein 2 heavy chain 1 (DYNC2H1) of Homo sapiens (Human).